Here is a 65-residue protein sequence, read N- to C-terminus: Toxin Cbo5 (65 aa).

The LCN-type CS-alpha/beta domain occupies 2–65; that stretch reads KDGYLVDKTG…QTWPLPNKSC (64 aa). Intrachain disulfides connect Cys12–Cys65, Cys16–Cys41, Cys25–Cys46, and Cys29–Cys48.

Belongs to the long (4 C-C) scorpion toxin superfamily. Sodium channel inhibitor family. Beta subfamily. In terms of tissue distribution, expressed by the venom gland.

It localises to the secreted. Its function is as follows. A probable toxin that has no activity on the tested sodium channels (when tested at 200 nM) and is not toxic to mice, crickets or sweet water shrimps. It resembles Beta toxins that bind voltage-independently at site-4 of sodium channels and shift the voltage of activation toward more negative potentials, thereby affecting sodium channel activation and promoting spontaneous and repetitive firing. In Centruroides bonito (Scorpion), this protein is Toxin Cbo5.